The primary structure comprises 405 residues: MTVLSEQDKIRLLADIVKIQTENDHEIEVCEYLKDLLSQYDIDSKIVKVNDSRANLVAEIGSGAPVLAISGHMDVVDAGDHDDWTFPPFELTDKDGKLFGRGTTDMKGGLMAMVIAMIELKQSNALKQGTIRLLATTGEETEQYGAQLLADEGYLDDVSGLIIGEPTSNIAYYAHKGSMSCVVTAKGKAAHSSMPHLGTNAVDILVDFVNEMKQEYKNIKEHDKVHELDAVPMIEKHLHRKIGEEESHIYSGFVMLNSVFNGGKQVNSVPHKATAKYNVRTVPEYDSTFVKDLFEKVIRHVGENYLTVDIPSSHDPVASDRDNPLIQNITRIAPNYVHEDIVVSALIGTTDASSFLGTNENNVDFAVFGPGESIMAHQVDEFIRKDMYLSYIDVYKDVFKAYLEK.

H72 is a Zn(2+) binding site. D74 is a catalytic residue. D105 is a Zn(2+) binding site. Catalysis depends on E139, which acts as the Proton acceptor. The Zn(2+) site is built by E140, E165, and H377.

The protein belongs to the peptidase M20A family. The cofactor is Zn(2+). Co(2+) is required as a cofactor.

It carries out the reaction N-succinyl-(2S,6S)-2,6-diaminopimelate + H2O = (2S,6S)-2,6-diaminopimelate + succinate. It participates in amino-acid biosynthesis; L-lysine biosynthesis via DAP pathway; LL-2,6-diaminopimelate from (S)-tetrahydrodipicolinate (succinylase route): step 3/3. The sequence is that of Probable succinyl-diaminopimelate desuccinylase (dapE) from Staphylococcus epidermidis (strain ATCC 12228 / FDA PCI 1200).